The primary structure comprises 299 residues: 4-hydroxy-tetrahydrodipicolinate synthase (299 aa).

Thr-44 is a pyruvate binding site. The Proton donor/acceptor role is filled by Tyr-133. Lys-162 acts as the Schiff-base intermediate with substrate in catalysis. Ile-204 provides a ligand contact to pyruvate.

Belongs to the DapA family. In terms of assembly, homotetramer; dimer of dimers.

The protein localises to the cytoplasm. The enzyme catalyses L-aspartate 4-semialdehyde + pyruvate = (2S,4S)-4-hydroxy-2,3,4,5-tetrahydrodipicolinate + H2O + H(+). It functions in the pathway amino-acid biosynthesis; L-lysine biosynthesis via DAP pathway; (S)-tetrahydrodipicolinate from L-aspartate: step 3/4. Its function is as follows. Catalyzes the condensation of (S)-aspartate-beta-semialdehyde [(S)-ASA] and pyruvate to 4-hydroxy-tetrahydrodipicolinate (HTPA). The sequence is that of 4-hydroxy-tetrahydrodipicolinate synthase from Thermus thermophilus (strain ATCC 27634 / DSM 579 / HB8).